Here is a 154-residue protein sequence, read N- to C-terminus: Putative lipoprotein MAB_4074c (154 aa).

The N-terminal stretch at 1–21 (MMNRVIVGAMGLLAAGAVVVG) is a signal peptide. The N-palmitoyl cysteine moiety is linked to residue cysteine 22. Cysteine 22 is lipidated: S-diacylglycerol cysteine.

Belongs to the mycobacterial 19 kDa antigen family.

The protein localises to the cell membrane. The chain is Putative lipoprotein MAB_4074c from Mycobacteroides abscessus (strain ATCC 19977 / DSM 44196 / CCUG 20993 / CIP 104536 / JCM 13569 / NCTC 13031 / TMC 1543 / L948) (Mycobacterium abscessus).